We begin with the raw amino-acid sequence, 105 residues long: Large ribosomal subunit protein bL21 (105 aa).

The protein belongs to the bacterial ribosomal protein bL21 family. Part of the 50S ribosomal subunit. Contacts protein L20.

This protein binds to 23S rRNA in the presence of protein L20. The polypeptide is Large ribosomal subunit protein bL21 (Rickettsia prowazekii (strain Madrid E)).